We begin with the raw amino-acid sequence, 192 residues long: ER membrane protein complex subunit 8/9 homolog (192 aa).

One can recognise an MPN domain in the interval 5–135 (ISITTEALSK…LVSIDKVGSD (131 aa)).

The protein belongs to the EMC8/EMC9 family.

In Dictyostelium discoideum (Social amoeba), this protein is ER membrane protein complex subunit 8/9 homolog.